We begin with the raw amino-acid sequence, 880 residues long: Alanine--tRNA ligase (880 aa).

4 residues coordinate Zn(2+): histidine 568, histidine 572, cysteine 670, and histidine 674.

The protein belongs to the class-II aminoacyl-tRNA synthetase family. The cofactor is Zn(2+).

Its subcellular location is the cytoplasm. The enzyme catalyses tRNA(Ala) + L-alanine + ATP = L-alanyl-tRNA(Ala) + AMP + diphosphate. Its function is as follows. Catalyzes the attachment of alanine to tRNA(Ala) in a two-step reaction: alanine is first activated by ATP to form Ala-AMP and then transferred to the acceptor end of tRNA(Ala). Also edits incorrectly charged Ser-tRNA(Ala) and Gly-tRNA(Ala) via its editing domain. The polypeptide is Alanine--tRNA ligase (Ligilactobacillus salivarius (strain UCC118) (Lactobacillus salivarius)).